The sequence spans 183 residues: Ubiquitin-conjugating enzyme E2 6 (183 aa).

In terms of domain architecture, UBC core spans 1–148; that stretch reads MASPSKRREM…VKEYCEKYAK (148 aa). Cysteine 85 acts as the Glycyl thioester intermediate in catalysis. The disordered stretch occupies residues 148–183; sequence KPEEILSDDDDDDSMSEDGSDSDDDDDDEIVGKADP. Residues 152-176 are compositionally biased toward acidic residues; that stretch reads ILSDDDDDDSMSEDGSDSDDDDDDE.

This sequence belongs to the ubiquitin-conjugating enzyme family. In terms of tissue distribution, expressed in roots, petals, sepals and silique walls.

The catalysed reaction is S-ubiquitinyl-[E1 ubiquitin-activating enzyme]-L-cysteine + [E2 ubiquitin-conjugating enzyme]-L-cysteine = [E1 ubiquitin-activating enzyme]-L-cysteine + S-ubiquitinyl-[E2 ubiquitin-conjugating enzyme]-L-cysteine.. It participates in protein modification; protein ubiquitination. Functionally, accepts the ubiquitin from the E1 complex and catalyzes its covalent attachment to other proteins. The chain is Ubiquitin-conjugating enzyme E2 6 (UBC6) from Arabidopsis thaliana (Mouse-ear cress).